A 329-amino-acid polypeptide reads, in one-letter code: Malate dehydrogenase (329 aa).

Position 12–18 (glycine 12–glycine 18) interacts with NAD(+). Substrate is bound by residues arginine 93 and arginine 99. NAD(+) contacts are provided by residues asparagine 106, glutamine 113, and valine 130–asparagine 132. The substrate site is built by asparagine 132 and arginine 163. The Proton acceptor role is filled by histidine 188.

This sequence belongs to the LDH/MDH superfamily. MDH type 2 family.

The enzyme catalyses (S)-malate + NAD(+) = oxaloacetate + NADH + H(+). Catalyzes the reversible oxidation of malate to oxaloacetate. In Frankia casuarinae (strain DSM 45818 / CECT 9043 / HFP020203 / CcI3), this protein is Malate dehydrogenase.